Here is a 309-residue protein sequence, read N- to C-terminus: tRNA pseudouridine synthase B (309 aa).

D51 functions as the Nucleophile in the catalytic mechanism.

The protein belongs to the pseudouridine synthase TruB family. Type 1 subfamily.

The enzyme catalyses uridine(55) in tRNA = pseudouridine(55) in tRNA. Functionally, responsible for synthesis of pseudouridine from uracil-55 in the psi GC loop of transfer RNAs. The polypeptide is tRNA pseudouridine synthase B (Coxiella burnetii (strain Dugway 5J108-111)).